A 267-amino-acid polypeptide reads, in one-letter code: Hydroxyethylthiazole kinase (267 aa).

Residue Met-49 participates in substrate binding. Residues Arg-124 and Thr-170 each coordinate ATP. Position 197 (Gly-197) interacts with substrate.

This sequence belongs to the Thz kinase family. Mg(2+) serves as cofactor.

The catalysed reaction is 5-(2-hydroxyethyl)-4-methylthiazole + ATP = 4-methyl-5-(2-phosphooxyethyl)-thiazole + ADP + H(+). The protein operates within cofactor biosynthesis; thiamine diphosphate biosynthesis; 4-methyl-5-(2-phosphoethyl)-thiazole from 5-(2-hydroxyethyl)-4-methylthiazole: step 1/1. Its function is as follows. Catalyzes the phosphorylation of the hydroxyl group of 4-methyl-5-beta-hydroxyethylthiazole (THZ). The chain is Hydroxyethylthiazole kinase from Tolumonas auensis (strain DSM 9187 / NBRC 110442 / TA 4).